A 347-amino-acid polypeptide reads, in one-letter code: Ryncolin-3 (347 aa).

The first 19 residues, 1-19 (MKPWAAFHLIFLVASSVEG), serve as a signal peptide directing secretion. Residues 57–114 (GIPGVPGINGSEGLKGDPGPQGLPGETGFDGIPGVAGPKGDKGDQGDKGDKGDKGDKG) form the Collagen-like domain. Residues 62–115 (PGINGSEGLKGDPGPQGLPGETGFDGIPGVAGPKGDKGDQGDKGDKGDKGDKGD) are disordered. The span at 95–115 (KGDKGDQGDKGDKGDKGDKGD) shows a compositional bias: basic and acidic residues. In terms of domain architecture, Fibrinogen C-terminal spans 121 to 341 (DCPPTDVEVR…YADMKIRPQQ (221 aa)). 2 disulfides stabilise this stretch: Cys-132–Cys-160 and Cys-284–Cys-297.

The protein belongs to the ficolin lectin family. Veficolin subfamily. Post-translationally, hydroxylated. Expressed by the venom duct.

Its subcellular location is the secreted. In terms of biological role, initiates complement activation and/or interferes in platelet aggregation and/or blood coagulation. The protein is Ryncolin-3 of Cerberus rynchops (Dog-faced water snake).